The following is a 110-amino-acid chain: Cytochrome subunit of sulfide dehydrogenase (110 aa).

An N-terminal signal peptide occupies residues 1–16 (MLAAAPLLLASGNGFA). The heme c site is built by cysteine 41, cysteine 44, histidine 45, and methionine 83.

As to quaternary structure, dimer of one cytochrome and one flavoprotein. In terms of processing, binds 1 heme c group covalently per subunit.

Its subcellular location is the periplasm. Functionally, monoheme cytochrome that function as the electron transport subunit of sulfide dehydrogenase. The polypeptide is Cytochrome subunit of sulfide dehydrogenase (fccA) (Chlorobaculum tepidum (strain ATCC 49652 / DSM 12025 / NBRC 103806 / TLS) (Chlorobium tepidum)).